Here is a 332-residue protein sequence, read N- to C-terminus: Alanine racemase (332 aa).

Lys-33 (proton acceptor; specific for D-alanine) is an active-site residue. Lys-33 is subject to N6-(pyridoxal phosphate)lysine. Arg-115 is a substrate binding site. Catalysis depends on Tyr-245, which acts as the Proton acceptor; specific for L-alanine. Position 286 (Met-286) interacts with substrate.

This sequence belongs to the alanine racemase family. Requires pyridoxal 5'-phosphate as cofactor.

It carries out the reaction L-alanine = D-alanine. Its pathway is amino-acid biosynthesis; D-alanine biosynthesis; D-alanine from L-alanine: step 1/1. Catalyzes the interconversion of L-alanine and D-alanine. May also act on other amino acids. This is Alanine racemase (alr) from Nitratiruptor sp. (strain SB155-2).